A 1700-amino-acid polypeptide reads, in one-letter code: A-kinase anchor protein SPHKAP (1700 aa).

3 disordered regions span residues 364 to 385 (SNLN…QDGE), 742 to 778 (IRRR…SNSH), and 793 to 885 (SKQD…NTQE). Positions 768 to 778 (SSSSSPLSNSH) are enriched in low complexity. Positions 822–831 (DSSTATTSSK) are enriched in polar residues. Over residues 839 to 855 (AGEDTKSPHHSENECRA) the composition is skewed to basic and acidic residues. Positions 857–873 (SEGQRSPTVSQSRSGSQ) are enriched in polar residues. Residues 929-946 (FAEELADTVVSMATEIAA) are PKA-RII subunit binding domain. The disordered stretch occupies residues 980 to 1006 (KRKKESQGSGTAVRKHKPPRLSEIKRK). Ser1025, Ser1085, Ser1107, Ser1120, Ser1121, Ser1124, Ser1259, and Ser1288 each carry phosphoserine. Disordered regions lie at residues 1374-1414 (DSVT…PVPI), 1481-1535 (IHSD…DTSS), and 1585-1604 (GQSE…TASP). Residues 1383–1398 (PVSSLSKTASLTNHSP) show a composition bias toward polar residues. Over residues 1586 to 1604 (QSESTEAPASGPPTGTASP) the composition is skewed to polar residues.

Belongs to the AKAP110 family. In terms of assembly, interacts (via the PKA-RII subunit binding domain) with the RI subunit of PKA. Interacts with SPHK1; the interaction greatly reduces SPHK1 activity. Highly expressed in heart. Both isoforms abundantly expressed in ventricle. Also expressed in spleen, ovary and brain.

The protein resides in the cytoplasm. Its function is as follows. Anchoring protein that binds preferentially to the type I regulatory subunit of c-AMP-dependent protein kinase (PKA type I) and targets it to distinct subcellular compartments. May act as a converging factor linking cAMP and sphingosine signaling pathways. Plays a regulatory role in the modulation of SPHK1. The protein is A-kinase anchor protein SPHKAP (SPHKAP) of Homo sapiens (Human).